A 248-amino-acid polypeptide reads, in one-letter code: Granulin (248 aa).

Belongs to the polyhedrin family.

Component of the virus occlusion bodies, which are large proteinaceous structures, that protect the virus from the outside environment for extended periods until they are ingested by insect larvae. The polypeptide is Granulin (Zygaenidae (burnets)).